We begin with the raw amino-acid sequence, 520 residues long: Acetyltransferase MAT1 (520 aa).

Active-site proton acceptor residues include His183 and Asp456.

Belongs to the plant acyltransferase family.

The protein operates within secondary metabolite biosynthesis. Functionally, acyl-CoA-dependent acyltransferase; part of the gene cluster that mediates the biosynthesis of mannosylerythritol lipids (MELs), surface-active substances that enhance the availability of water-insoluble substrates. Depending on the number of acetyl groups, mannosylerythritol lipids can be differentiated into MEL A (fully acetylated), MEL B and MEL C (monoacetylated at R-6 and R-4, respectively), and the fully deacetylated MEL D. The first step in the pathway is the generation of mannosylerythritol by the glycosyltransferase EMT1 which catalyzes the transfer of GDP-mannose to the C-4 atom of meso-erythritol. This reaction has to be stereospecific, since only mannosyl-D-erythritol is generated. The produced disaccharide is subsequently acylated with fatty acids of various lengths by the acyltransferases MAC1 and MAC2 at positions C-2 and C-3, repectively. The existence of MEL derivatives which carry an acetyl group at C-2 implies that at least MAC1 also accepts acetyl-CoA as a donor. The final step of MEL biosynthesis is the acetylation of the fully acylated mannosylerythritol lipids catalyzed by the acetyl-CoA-dependent acetyltransferase MAT1. MAT1 displays a relaxed regioselectivity and is able to transfer acetylgroups to both positions C-4 and C-6 of the mannosyl moiety. The sequence is that of Acetyltransferase MAT1 from Pseudozyma antarctica (strain T-34) (Yeast).